We begin with the raw amino-acid sequence, 257 residues long: Deoxyribose-phosphate aldolase (257 aa).

The Proton donor/acceptor role is filled by Asp102. Lys166 functions as the Schiff-base intermediate with acetaldehyde in the catalytic mechanism. Residue Lys198 is the Proton donor/acceptor of the active site.

Belongs to the DeoC/FbaB aldolase family. DeoC type 2 subfamily.

Its subcellular location is the cytoplasm. The enzyme catalyses 2-deoxy-D-ribose 5-phosphate = D-glyceraldehyde 3-phosphate + acetaldehyde. It functions in the pathway carbohydrate degradation; 2-deoxy-D-ribose 1-phosphate degradation; D-glyceraldehyde 3-phosphate and acetaldehyde from 2-deoxy-alpha-D-ribose 1-phosphate: step 2/2. Its function is as follows. Catalyzes a reversible aldol reaction between acetaldehyde and D-glyceraldehyde 3-phosphate to generate 2-deoxy-D-ribose 5-phosphate. The chain is Deoxyribose-phosphate aldolase from Aeromonas hydrophila subsp. hydrophila (strain ATCC 7966 / DSM 30187 / BCRC 13018 / CCUG 14551 / JCM 1027 / KCTC 2358 / NCIMB 9240 / NCTC 8049).